A 588-amino-acid chain; its full sequence is L-fucose isomerase (588 aa).

Active-site proton acceptor residues include glutamate 335 and aspartate 359. Residues glutamate 335, aspartate 359, and histidine 525 each contribute to the Mn(2+) site.

The protein belongs to the L-fucose isomerase family. Mn(2+) serves as cofactor.

Its subcellular location is the cytoplasm. It carries out the reaction L-fucose = L-fuculose. It participates in carbohydrate degradation; L-fucose degradation; L-lactaldehyde and glycerone phosphate from L-fucose: step 1/3. Its function is as follows. Converts the aldose L-fucose into the corresponding ketose L-fuculose. This is L-fucose isomerase from Streptococcus pneumoniae (strain JJA).